The sequence spans 64 residues: MSGRQGGKAKPLKAPKKGEKDLSEEDVEFKKKQQEEAKKIKEMAAKAGQRGPLLGGGIKKSGKK.

Residues Met1–Lys64 are disordered. Positions Asp21–Arg50 form a coiled coil. Basic and acidic residues predominate over residues Glu28–Ala44. Over residues Leu53–Lys64 the composition is skewed to gly residues.

This sequence belongs to the TMA7 family.

The chain is Translation machinery-associated protein 7 homolog from Caenorhabditis briggsae.